We begin with the raw amino-acid sequence, 362 residues long: Beta-ketoacyl-[acyl-carrier-protein] synthase III 2 (362 aa).

Residues cysteine 113 and histidine 251 contribute to the active site. The interval glutamine 252–arginine 256 is ACP-binding. Asparagine 281 is a catalytic residue.

The protein belongs to the thiolase-like superfamily. FabH family. Homodimer.

The protein localises to the cytoplasm. The catalysed reaction is malonyl-[ACP] + acetyl-CoA + H(+) = 3-oxobutanoyl-[ACP] + CO2 + CoA. It functions in the pathway lipid metabolism; fatty acid biosynthesis. Catalyzes the condensation reaction of fatty acid synthesis by the addition to an acyl acceptor of two carbons from malonyl-ACP. Catalyzes the first condensation reaction which initiates fatty acid synthesis and may therefore play a role in governing the total rate of fatty acid production. Possesses both acetoacetyl-ACP synthase and acetyl transacylase activities. Its substrate specificity determines the biosynthesis of branched-chain and/or straight-chain of fatty acids. The protein is Beta-ketoacyl-[acyl-carrier-protein] synthase III 2 of Vibrio cholerae serotype O1 (strain ATCC 39315 / El Tor Inaba N16961).